The following is a 257-amino-acid chain: Diphthine synthase (257 aa).

S-adenosyl-L-methionine is bound by residues Leu9, Asp85, Val88, 113 to 114 (SI), Leu164, Ala207, and His232.

Belongs to the diphthine synthase family. As to quaternary structure, homodimer.

It catalyses the reaction 2-[(3S)-amino-3-carboxypropyl]-L-histidyl-[translation elongation factor 2] + 3 S-adenosyl-L-methionine = diphthine-[translation elongation factor 2] + 3 S-adenosyl-L-homocysteine + 3 H(+). Its pathway is protein modification; peptidyl-diphthamide biosynthesis. S-adenosyl-L-methionine-dependent methyltransferase that catalyzes the trimethylation of the amino group of the modified target histidine residue in translation elongation factor 2 (EF-2), to form an intermediate called diphthine. The three successive methylation reactions represent the second step of diphthamide biosynthesis. In Methanococcus aeolicus (strain ATCC BAA-1280 / DSM 17508 / OCM 812 / Nankai-3), this protein is Diphthine synthase.